Here is a 282-residue protein sequence, read N- to C-terminus: MLPLLRCVPRVLGSAVPSLRAAAPASPFRQLLTPGPRLCARPFGLLSVRAGSERRPGLLRPRGPCACGCGCGLLHTEGDKAFVDFLNDEIKEERKIQKHKTLPKMSGGWELELNGTEAKLMRKVAGEKITVTFNINNSIPPTFDGEEEPTQGQKVEEQEPELTSTPNFVVEVIKNDDGKKALVLDCHYPEDEVGQEDEAESDIFSIREVSFQSSGESEWKDTNYTLNTDSLDWALYDHLMDFLADRGVDNTFADELVELSTALEHQEYISFLEDLKSFVKSQ.

A mitochondrion-targeting transit peptide spans 1–70 (MLPLLRCVPR…PRGPCACGCG (70 aa)). Positions 76–93 (TEGDKAFVDFLNDEIKEE) are C1q binding. K91 bears the N6-acetyllysine mark. A disordered region spans residues 137-163 (NSIPPTFDGEEEPTQGQKVEEQEPELT). Positions 168 to 213 (FVVEVIKNDDGKKALVLDCHYPEDEVGQEDEAESDIFSIREVSFQS) are interaction with MAVS. Y188 bears the Phosphotyrosine mark. Phosphoserine is present on residues S201 and S205.

The protein belongs to the MAM33 family. Homotrimer; three monomers form a donut-shaped structure with an unusually asymmetric charge distribution on the surface. Interacts with CDK13, HRK, VTN, NFYB, ADRA1B, FOXC1, DDX21, DDX50, NCL, SRSF1 and SRSF9. Interacts with CD93; the association may represent a cell surface C1q receptor. Interacts with KRT1; the association represents a cell surface kininogen receptor. Interacts with CD209; the interaction is indicative for a C1q:C1QBP:CD209 signaling complex. Interacts with FBL and RRP1; the respective interactions with C1QBP are competitive. Probably associates with the mitoribosome. Interacts with MAVS; the interaction occurs upon viral transfection. Interacts with PPIF. Interacts with U2AF1L4. Interacts with PLEKHN1. Interacts with VGF-derived peptide TLQP-21. Interacts with MRE11 and RAD50; forming the MRC (MRE11-RAD50-C1QBP) complex that inhibits the activity of MRE11. As to quaternary structure, (Microbial infection) Interacts with Rubella virus capsid protein; the interaction occurs in mitochondria. In terms of assembly, (Microbial infection) Interacts with L.monocytogenes InlB.

It localises to the mitochondrion matrix. It is found in the nucleus. Its subcellular location is the cell membrane. The protein resides in the secreted. The protein localises to the cytoplasm. It localises to the nucleolus. In terms of biological role, multifunctional and multicompartmental protein involved in inflammation and infection processes, ribosome biogenesis, protein synthesis in mitochondria, regulation of apoptosis, transcriptional regulation and pre-mRNA splicing. At the cell surface is thought to act as an endothelial receptor for plasma proteins of the complement and kallikrein-kinin cascades. Putative receptor for C1q; specifically binds to the globular 'heads' of C1q thus inhibiting C1; may perform the receptor function through a complex with C1qR/CD93. In complex with cytokeratin-1/KRT1 is a high affinity receptor for kininogen-1/HMWK. Can also bind other plasma proteins, such as coagulation factor XII leading to its autoactivation. May function to bind initially fluid kininogen-1 to the cell membrane. The secreted form may enhance both extrinsic and intrinsic coagulation pathways. It is postulated that the cell surface form requires docking with transmembrane proteins for downstream signaling which might be specific for a cell-type or response. By acting as C1q receptor is involved in chemotaxis of immature dendritic cells and neutrophils and is proposed to signal through CD209/DC-SIGN on immature dendritic cells, through integrin alpha-4/beta-1 during trophoblast invasion of the decidua, and through integrin beta-1 during endothelial cell adhesion and spreading. Signaling involved in inhibition of innate immune response is implicating the PI3K-AKT/PKB pathway. Required for protein synthesis in mitochondria. In mitochondrial translation may be involved in formation of functional 55S mitoribosomes; the function seems to involve its RNA-binding activity. Acts as a RNA modification reader, which specifically recognizes and binds mitochondrial RNAs modified by C5-methylcytosine (m5C) in response to stress, and promotes recruitment of the mitochondrial degradosome complex, leading to their degradation. May be involved in the nucleolar ribosome maturation process; the function may involve the exchange of FBL for RRP1 in the association with pre-ribosome particles. Involved in regulation of RNA splicing by inhibiting the RNA-binding capacity of SRSF1 and its phosphorylation. Is required for the nuclear translocation of splicing factor U2AF1L4. Involved in regulation of CDKN2A- and HRK-mediated apoptosis. Stabilizes mitochondrial CDKN2A isoform smARF. May be involved in regulation of FOXC1 transcriptional activity and NFY/CCAAT-binding factor complex-mediated transcription. May play a role in antibacterial defense as it can bind to cell surface hyaluronan and inhibit Streptococcus pneumoniae hyaluronate lyase. May be involved in modulation of the immune response; ligation by HCV core protein is resulting in suppression of interleukin-12 production in monocyte-derived dendritic cells. Involved in regulation of antiviral response by inhibiting RIGI- and IFIH1-mediated signaling pathways probably involving its association with MAVS after viral infection. Acts as a regulator of DNA repair via homologous recombination by inhibiting the activity of MRE11: interacts with unphosphorylated MRE11 and RAD50 in absence of DNA damage, preventing formation and activity of the MRN complex. Following DNA damage, dissociates from phosphorylated MRE11, allowing formation of the MRN complex. (Microbial infection) During bacterial infection processes acts as an attachment site for microbial proteins, including Listeria monocytogenes internalin B (InlB). This Chlorocebus aethiops (Green monkey) protein is Complement component 1 Q subcomponent-binding protein, mitochondrial (C1QBP).